The primary structure comprises 503 residues: Probable cytochrome P450 303a1 (503 aa).

Cys448 lines the heme pocket.

Belongs to the cytochrome P450 family. Requires heme as cofactor.

It localises to the endoplasmic reticulum membrane. Its subcellular location is the microsome membrane. Its function is as follows. May be involved in the metabolism of insect hormones and in the breakdown of synthetic insecticides. In Drosophila melanogaster (Fruit fly), this protein is Probable cytochrome P450 303a1 (Cyp303a1).